Here is a 620-residue protein sequence, read N- to C-terminus: Chaperone protein DnaK (620 aa).

Threonine 174 is subject to Phosphothreonine; by autocatalysis. The segment at 590-620 (AAGAGPDMSGAGPQGDTYAGDDVVDGDYREV) is disordered.

The protein belongs to the heat shock protein 70 family.

Functionally, acts as a chaperone. In Lachnoclostridium phytofermentans (strain ATCC 700394 / DSM 18823 / ISDg) (Clostridium phytofermentans), this protein is Chaperone protein DnaK.